Here is a 158-residue protein sequence, read N- to C-terminus: Putative pre-16S rRNA nuclease (158 aa).

The tract at residues 138–158 (ELKPAQQTASRSGAGAGDGGS) is disordered.

Belongs to the YqgF nuclease family.

The protein localises to the cytoplasm. Its function is as follows. Could be a nuclease involved in processing of the 5'-end of pre-16S rRNA. This Synechococcus sp. (strain CC9605) protein is Putative pre-16S rRNA nuclease.